Here is a 652-residue protein sequence, read N- to C-terminus: Iron-regulated outer membrane virulence protein (652 aa).

The first 25 residues, 1-25, serve as a signal peptide directing secretion; the sequence is MSRFNPSPVSLSVTLGLMFSASAFA. The TonB box signature appears at 33–40; the sequence is ETMVVTAA. In terms of domain architecture, TBDR plug spans 45-162; the sequence is VIQNAPASIS…IGGVINIITR (118 aa). The TBDR beta-barrel domain occupies 167–652; it reads QWSGNVQLST…RYWLGLDIAF (486 aa). The TonB C-terminal box motif lies at 635-652; that stretch reads YGYVEDGRRYWLGLDIAF.

Belongs to the TonB-dependent receptor family.

Its subcellular location is the cell outer membrane. Functionally, involved in the initial step of iron uptake by binding ferric vibriobactin, an iron chelatin siderophore that allows V.cholerae to extract iron from the environment. The polypeptide is Iron-regulated outer membrane virulence protein (irgA) (Vibrio cholerae serotype O1 (strain ATCC 39541 / Classical Ogawa 395 / O395)).